The primary structure comprises 451 residues: UDP-N-acetylmuramate--L-alanine ligase (451 aa).

ATP is bound at residue 110–116; that stretch reads GTHGKTT.

Belongs to the MurCDEF family.

It is found in the cytoplasm. The catalysed reaction is UDP-N-acetyl-alpha-D-muramate + L-alanine + ATP = UDP-N-acetyl-alpha-D-muramoyl-L-alanine + ADP + phosphate + H(+). It functions in the pathway cell wall biogenesis; peptidoglycan biosynthesis. Cell wall formation. This Francisella tularensis subsp. tularensis (strain SCHU S4 / Schu 4) protein is UDP-N-acetylmuramate--L-alanine ligase.